A 102-amino-acid polypeptide reads, in one-letter code: Large ribosomal subunit protein bL21 (102 aa).

The protein belongs to the bacterial ribosomal protein bL21 family. In terms of assembly, part of the 50S ribosomal subunit. Contacts protein L20.

In terms of biological role, this protein binds to 23S rRNA in the presence of protein L20. The chain is Large ribosomal subunit protein bL21 from Lactiplantibacillus plantarum (strain ATCC BAA-793 / NCIMB 8826 / WCFS1) (Lactobacillus plantarum).